The chain runs to 362 residues: Carbamoyl phosphate synthase small chain (362 aa).

The segment at 1-172 is CPSase; that stretch reads MKAFLVLDNG…SKYIFGTHTG (172 aa). L-glutamine-binding residues include serine 45, glycine 224, and glycine 226. One can recognise a Glutamine amidotransferase type-1 domain in the interval 176–362; sequence KLAVYDYGVK…YDLVEKTKKG (187 aa). Catalysis depends on cysteine 252, which acts as the Nucleophile. Positions 253, 256, 294, 296, and 297 each coordinate L-glutamine. Active-site residues include histidine 335 and glutamate 337.

Belongs to the CarA family. As to quaternary structure, composed of two chains; the small (or glutamine) chain promotes the hydrolysis of glutamine to ammonia, which is used by the large (or ammonia) chain to synthesize carbamoyl phosphate. Tetramer of heterodimers (alpha,beta)4.

It carries out the reaction hydrogencarbonate + L-glutamine + 2 ATP + H2O = carbamoyl phosphate + L-glutamate + 2 ADP + phosphate + 2 H(+). It catalyses the reaction L-glutamine + H2O = L-glutamate + NH4(+). It participates in amino-acid biosynthesis; L-arginine biosynthesis; carbamoyl phosphate from bicarbonate: step 1/1. It functions in the pathway pyrimidine metabolism; UMP biosynthesis via de novo pathway; (S)-dihydroorotate from bicarbonate: step 1/3. Its function is as follows. Small subunit of the glutamine-dependent carbamoyl phosphate synthetase (CPSase). CPSase catalyzes the formation of carbamoyl phosphate from the ammonia moiety of glutamine, carbonate, and phosphate donated by ATP, constituting the first step of 2 biosynthetic pathways, one leading to arginine and/or urea and the other to pyrimidine nucleotides. The small subunit (glutamine amidotransferase) binds and cleaves glutamine to supply the large subunit with the substrate ammonia. The protein is Carbamoyl phosphate synthase small chain of Leptospira interrogans serogroup Icterohaemorrhagiae serovar Lai (strain 56601).